The following is a 636-amino-acid chain: 1-deoxy-D-xylulose-5-phosphate synthase 2 (636 aa).

Thiamine diphosphate contacts are provided by residues H78 and A119–S121. Position 150 (D150) interacts with Mg(2+). Thiamine diphosphate is bound by residues G151–S152, N179, Y288, and E370. A Mg(2+)-binding site is contributed by N179.

This sequence belongs to the transketolase family. DXPS subfamily. In terms of assembly, homodimer. The cofactor is Mg(2+). Requires thiamine diphosphate as cofactor.

The catalysed reaction is D-glyceraldehyde 3-phosphate + pyruvate + H(+) = 1-deoxy-D-xylulose 5-phosphate + CO2. It participates in metabolic intermediate biosynthesis; 1-deoxy-D-xylulose 5-phosphate biosynthesis; 1-deoxy-D-xylulose 5-phosphate from D-glyceraldehyde 3-phosphate and pyruvate: step 1/1. Its function is as follows. Catalyzes the acyloin condensation reaction between C atoms 2 and 3 of pyruvate and glyceraldehyde 3-phosphate to yield 1-deoxy-D-xylulose-5-phosphate (DXP). The sequence is that of 1-deoxy-D-xylulose-5-phosphate synthase 2 from Jannaschia sp. (strain CCS1).